The sequence spans 653 residues: Chaperone protein DnaK (653 aa).

Thr200 carries the phosphothreonine; by autocatalysis modification. A disordered region spans residues 612 to 653; sequence QGAAGAAGAAGGAGAAAGAEAAGASQQADDVVDAEFKEVKKD. Low complexity predominate over residues 627-639; the sequence is AAGAEAAGASQQA.

The protein belongs to the heat shock protein 70 family.

In terms of biological role, acts as a chaperone. This Paraburkholderia phymatum (strain DSM 17167 / CIP 108236 / LMG 21445 / STM815) (Burkholderia phymatum) protein is Chaperone protein DnaK.